Reading from the N-terminus, the 632-residue chain is Arginyl-tRNA--protein transferase 1 (632 aa).

Residues 1–18 (MSLKNDASSSHDGGSNRE) show a composition bias toward polar residues. 4 disordered regions span residues 1–27 (MSLKNDASSSHDGGSNRESVIDDHGRR), 113–144 (KLDVQPREQRGASSSGDVSDTRRKTLGAAKSE), 284–312 (NGNISRGANSLDGSETLHAKKDSENHQAR), and 517–580 (PAAS…NDIN). Basic and acidic residues predominate over residues 113–122 (KLDVQPREQR). Positions 285 to 296 (GNISRGANSLDG) are enriched in polar residues. Residues 298–310 (ETLHAKKDSENHQ) show a composition bias toward basic and acidic residues. The span at 538 to 563 (SDEDEDEDEDDDDDDDDDEEMYETES) shows a compositional bias: acidic residues. Over residues 564 to 578 (EDSHIESDPGSKDND) the composition is skewed to basic and acidic residues.

It belongs to the R-transferase family.

It catalyses the reaction an N-terminal L-alpha-aminoacyl-[protein] + L-arginyl-tRNA(Arg) = an N-terminal L-arginyl-L-aminoacyl-[protein] + tRNA(Arg) + H(+). In terms of biological role, involved in the post-translational conjugation of arginine to the N-terminal aspartate or glutamate of a protein. This arginylation is required for degradation of the protein via the ubiquitin pathway. Component of the N-end rule pathway with ATE2 and PRT6. The N-end rule pathway regulates seed after-ripening, seedling sugar sensitivity, seedling lipid breakdown, and abscisic acid (ABA) sensitivity of germination. The end-rule pathway regulates various aspects of leaf and shoot development. Involved in the oxygen-dependent N-arginylation of RAP2-12, an activator of hypoxic gene expression. This N-terminal modification leads to ubiquitination by PRT6 and subsequent degradation of RAP2-12 under aerobic conditions. Has an important role in the progression of leaf senescence. Involved in disease resistance. The end-rule pathway plays a role in regulating the timing and amplitude of the immune response following infection with the bacterial pathogen Pseudomonas syringae pv tomato. Regulates the biosynthesis of plant-defense metabolites such as glucosinolates, and the biosynthesis and response to the phytohormone jasmonate (JA), which plays a key role in plant immunity. The chain is Arginyl-tRNA--protein transferase 1 from Arabidopsis thaliana (Mouse-ear cress).